The primary structure comprises 1073 residues: DNA-directed RNA polymerase subunit beta (1073 aa).

The protein belongs to the RNA polymerase beta chain family. In terms of assembly, in plastids the minimal PEP RNA polymerase catalytic core is composed of four subunits: alpha, beta, beta', and beta''. When a (nuclear-encoded) sigma factor is associated with the core the holoenzyme is formed, which can initiate transcription.

The protein resides in the plastid. The protein localises to the chloroplast. It catalyses the reaction RNA(n) + a ribonucleoside 5'-triphosphate = RNA(n+1) + diphosphate. Its function is as follows. DNA-dependent RNA polymerase catalyzes the transcription of DNA into RNA using the four ribonucleoside triphosphates as substrates. This Aethionema cordifolium (Lebanon stonecress) protein is DNA-directed RNA polymerase subunit beta.